The sequence spans 488 residues: Probable metabolite transport protein YBR241C (488 aa).

The Cytoplasmic portion of the chain corresponds to 1–18 (MAETERLMPNGGSRETKP). The helical transmembrane segment at 19–39 (LITGHLILGTIVACLGSIQYG) threads the bilayer. Over 40 to 87 (YHIAELNAPQEFLSCSRFEAPDENISYDDTWVGQHGLKQCIALTDSQY) the chain is Vacuolar. An N-linked (GlcNAc...) asparagine glycan is attached at asparagine 63. A helical membrane pass occupies residues 88-108 (GAITSIFSIGGLFGSYYAGNW). Residues 109–121 (ANRYGRKYVSMGA) lie on the Cytoplasmic side of the membrane. The helical transmembrane segment at 122-142 (SAMCMVSSLLLFFSNSYLQLL) threads the bilayer. Topologically, residues 143–146 (FGRF) are vacuolar. The helical transmembrane segment at 147-167 (LVGMSCGTAIVITPLFINEIA) threads the bilayer. Over 168 to 178 (PVEWRGAMGSM) the chain is Cytoplasmic. A helical membrane pass occupies residues 179 to 198 (NQVSINLGILLTQTLALKYA). The Vacuolar segment spans residues 199–204 (DSYNWR). The helical transmembrane segment at 205–225 (WLLFSGSVIAVANILAWLKVD) threads the bilayer. Residues 226-299 (ESPRWLVSHG…DPSYKKPRTV (74 aa)) are Cytoplasmic-facing. Over residues 258 to 279 (EIQDWQRSHGHNRDPESSEETH) the composition is skewed to basic and acidic residues. A disordered region spans residues 258-281 (EIQDWQRSHGHNRDPESSEETHSG). The helical transmembrane segment at 300–320 (ILAILSCQQFCGINSIIFYGV) threads the bilayer. Residues 321–322 (KV) lie on the Vacuolar side of the membrane. The helical transmembrane segment at 323-337 (IGKILPDYSIQVNFA) threads the bilayer. Over 338–344 (ISILNVV) the chain is Cytoplasmic. Residues 345–364 (VTLAASAIIDHVGRRPLLLA) traverse the membrane as a helical segment. Topologically, residues 365–390 (STTVMTAMSLLISVGLTLSVSFLLVT) are vacuolar. Residues 391–411 (ATFVYIAAFAIGLGPIPFLII) form a helical membrane-spanning segment. Over 412–419 (GELSYPQD) the chain is Cytoplasmic. Residues 420 to 442 (AATAQSFGTVCNWLATFIVGYLF) traverse the membrane as a helical segment. Topologically, residues 443 to 446 (PIGH) are vacuolar. A helical membrane pass occupies residues 447-463 (GLMGGYVFAIFAAIAAM). Residues 464–488 (FATYVYKRVPETKGKTTYSEVWAGY) are Cytoplasmic-facing.

It belongs to the major facilitator superfamily. Sugar transporter (TC 2.A.1.1) family.

Its subcellular location is the vacuole membrane. The protein is Probable metabolite transport protein YBR241C of Saccharomyces cerevisiae (strain ATCC 204508 / S288c) (Baker's yeast).